Reading from the N-terminus, the 417-residue chain is E3 ubiquitin-protein ligase RNF135 (417 aa).

The RING-type zinc finger occupies 21 to 67 (CIICQGLLDQPTTLPCGHSFCLRCLHDLWVSKRGAVDGCPWACPICR). 2 disordered regions span residues 95–118 (EVEA…TVQK) and 143–173 (TQRP…SLDS). Coiled coils occupy residues 121 to 145 (TNVI…QTQR) and 180 to 204 (SISQ…QGSV). The span at 143–164 (TQRPNLGSGQDNAQGTPPTDSS) shows a compositional bias: polar residues. One can recognise a B30.2/SPRY domain in the interval 225-417 (PDQRRPAPRK…NYLEIKQLNT (193 aa)).

In terms of assembly, homodimer. Interacts (homodimer) with RIGI (double-stranded RNA-bound oligomeric form); involved in both RIGI ubiquitination, oligomerization into filaments associated with viral RNAs and the bridging of these filaments. Interacts with UBE2D3 and UBE2N; E2 ubiquitin ligases involved in RNF135-mediated ubiquitination of RIGI and activation of the RIG-I signaling pathway. Interacts with PCBP2. As to expression, ubiquitously expressed.

It is found in the cytoplasm. Its subcellular location is the stress granule. The enzyme catalyses S-ubiquitinyl-[E2 ubiquitin-conjugating enzyme]-L-cysteine + [acceptor protein]-L-lysine = [E2 ubiquitin-conjugating enzyme]-L-cysteine + N(6)-ubiquitinyl-[acceptor protein]-L-lysine.. The protein operates within protein modification; protein ubiquitination. Functionally, E2-dependent E3 ubiquitin-protein ligase that functions as a RIGI coreceptor in the sensing of viral RNAs in cell cytoplasm and the activation of the antiviral innate immune response. Together with the UBE2D3, UBE2N and UB2V1 E2 ligases, catalyzes the 'Lys-63'-linked polyubiquitination of RIGI oligomerized on viral RNAs, an essential step in the activation of the RIG-I signaling pathway. Through a ubiquitin-independent parallel mechanism, which consists in bridging RIGI filaments forming on longer viral RNAs, further activates the RIG-I signaling pathway. This second mechanism that synergizes with the ubiquitin-dependent one would thereby allow an RNA length-dependent regulation of the RIG-I signaling pathway. Associated with the E2 ligase UBE2N, also constitutively synthesizes unanchored 'Lys-63'-linked polyubiquitin chains that may also activate the RIG-I signaling pathway. It is not involved in the innate immune response against DNA viruses. This Mus musculus (Mouse) protein is E3 ubiquitin-protein ligase RNF135.